Here is a 180-residue protein sequence, read N- to C-terminus: Large ribosomal subunit protein uL5 (180 aa).

Belongs to the universal ribosomal protein uL5 family. As to quaternary structure, part of the 50S ribosomal subunit; part of the 5S rRNA/L5/L18/L25 subcomplex. Contacts the 5S rRNA and the P site tRNA. Forms a bridge to the 30S subunit in the 70S ribosome.

This is one of the proteins that bind and probably mediate the attachment of the 5S RNA into the large ribosomal subunit, where it forms part of the central protuberance. In the 70S ribosome it contacts protein S13 of the 30S subunit (bridge B1b), connecting the 2 subunits; this bridge is implicated in subunit movement. Contacts the P site tRNA; the 5S rRNA and some of its associated proteins might help stabilize positioning of ribosome-bound tRNAs. This is Large ribosomal subunit protein uL5 from Streptococcus equi subsp. equi (strain 4047).